A 955-amino-acid polypeptide reads, in one-letter code: B3 domain-containing protein Os07g0563300 (955 aa).

Composition is skewed to pro residues over residues 1–20 (MSSPAQPPPTRPPVAAPPPS) and 29–45 (VQPPPLQPKPPPHPQQP). 2 disordered regions span residues 1–81 (MSSP…QRPR) and 325–392 (ARKG…SSSL). The span at 62-71 (QHQQQQQGPP) shows a compositional bias: low complexity. Residues 332 to 342 (DPCSSVSTTFK) are compositionally biased toward polar residues. A compositionally biased stretch (basic and acidic residues) spans 343–355 (LDSHHPSILKDDP). Over residues 382–392 (QQQQQMASSSL) the composition is skewed to low complexity. Residues 453 to 554 (FEKMLSASDA…KLVMGFRKAT (102 aa)) constitute a DNA-binding region (TF-B3). Composition is skewed to polar residues over residues 556-565 (LSAEQDQPTK) and 598-608 (NTESKSSSPVE). A disordered region spans residues 556–642 (LSAEQDQPTK…PLPVKRKATS (87 aa)). The CW-type zinc finger occupies 708–758 (SGENHQWAQCEDCSKWRKLPVDALLPSKWTCSDNKWDSERSSCDSAQEINM). Residues Cys717, Cys720, Cys738, and Cys750 each coordinate Zn(2+). The interval 856-955 (MMRREKRQQS…ATRLLRDNPT (100 aa)) is disordered. Positions 862-877 (RQQSEKDSGVPRKREP) are enriched in basic and acidic residues. Composition is skewed to polar residues over residues 878–900 (GQSSEPVPQSGSGAHPTSTSSPH) and 920–933 (TSSPVKNQIDLNSQ). Basic and acidic residues predominate over residues 939–955 (EQSPKSDATRLLRDNPT).

Its subcellular location is the nucleus. The protein is B3 domain-containing protein Os07g0563300 of Oryza sativa subsp. japonica (Rice).